The following is a 504-amino-acid chain: Ribose import ATP-binding protein RbsA (504 aa).

ABC transporter domains follow at residues 6 to 242 (LELK…VGRR) and 252 to 495 (VRHG…VGKT). Residue 38–45 (GENGAGKS) participates in ATP binding.

The protein belongs to the ABC transporter superfamily. Ribose importer (TC 3.A.1.2.1) family. The complex is composed of an ATP-binding protein (RbsA), two transmembrane proteins (RbsC) and a solute-binding protein (RbsB).

It localises to the cell inner membrane. It catalyses the reaction D-ribose(out) + ATP + H2O = D-ribose(in) + ADP + phosphate + H(+). In terms of biological role, part of the ABC transporter complex RbsABC involved in ribose import. Responsible for energy coupling to the transport system. The polypeptide is Ribose import ATP-binding protein RbsA (Photobacterium profundum (strain SS9)).